The sequence spans 211 residues: Ribonuclease P protein component 3 (211 aa).

Belongs to the eukaryotic/archaeal RNase P protein component 3 family. Consists of a catalytic RNA component and at least 4-5 protein subunits.

The protein resides in the cytoplasm. It catalyses the reaction Endonucleolytic cleavage of RNA, removing 5'-extranucleotides from tRNA precursor.. In terms of biological role, part of ribonuclease P, a protein complex that generates mature tRNA molecules by cleaving their 5'-ends. The protein is Ribonuclease P protein component 3 of Aeropyrum pernix (strain ATCC 700893 / DSM 11879 / JCM 9820 / NBRC 100138 / K1).